A 321-amino-acid chain; its full sequence is Phosphoenolpyruvate transferase (321 aa).

Residue Asp51 coordinates 7,8-didemethyl-8-hydroxy-5-deazariboflavin.

Belongs to the CofD family. As to quaternary structure, homodimer. It depends on Mg(2+) as a cofactor.

The catalysed reaction is enolpyruvoyl-2-diphospho-5'-guanosine + 7,8-didemethyl-8-hydroxy-5-deazariboflavin = dehydro coenzyme F420-0 + GMP + H(+). It participates in cofactor biosynthesis; coenzyme F420 biosynthesis. In terms of biological role, catalyzes the transfer of the phosphoenolpyruvate moiety from enoylpyruvoyl-2-diphospho-5'-guanosine (EPPG) to 7,8-didemethyl-8-hydroxy-5-deazariboflavin (FO) with the formation of dehydro coenzyme F420-0 and GMP. In Kitasatospora aureofaciens (Streptomyces aureofaciens), this protein is Phosphoenolpyruvate transferase.